We begin with the raw amino-acid sequence, 180 residues long: Nucleoside-triphosphatase THEP1 (180 aa).

ATP-binding positions include 9–16 (GRPGIGKT) and 99–106 (VVIVDEVG).

The protein belongs to the THEP1 NTPase family.

It carries out the reaction a ribonucleoside 5'-triphosphate + H2O = a ribonucleoside 5'-diphosphate + phosphate + H(+). In terms of biological role, has nucleotide phosphatase activity towards ATP, GTP, CTP, TTP and UTP. May hydrolyze nucleoside diphosphates with lower efficiency. This Methanopyrus kandleri (strain AV19 / DSM 6324 / JCM 9639 / NBRC 100938) protein is Nucleoside-triphosphatase THEP1.